The chain runs to 487 residues: Betaine aldehyde dehydrogenase (487 aa).

K(+) contacts are provided by I27 and D93. Residue 149-151 (GAW) coordinates NAD(+). Catalysis depends on K161, which acts as the Charge relay system. NAD(+) is bound by residues 175–178 (KPSE) and 228–231 (SVPT). K(+) is bound at residue L243. E249 serves as the catalytic Proton acceptor. Residues G251, C283, and E384 each coordinate NAD(+). C283 functions as the Nucleophile in the catalytic mechanism. C283 bears the Cysteine sulfenic acid (-SOH) mark. Residues K454 and G457 each contribute to the K(+) site. Catalysis depends on E461, which acts as the Charge relay system.

It belongs to the aldehyde dehydrogenase family. Dimer of dimers. The cofactor is K(+).

It catalyses the reaction betaine aldehyde + NAD(+) + H2O = glycine betaine + NADH + 2 H(+). The protein operates within amine and polyamine biosynthesis; betaine biosynthesis via choline pathway; betaine from betaine aldehyde: step 1/1. Functionally, involved in the biosynthesis of the osmoprotectant glycine betaine. Catalyzes the irreversible oxidation of betaine aldehyde to the corresponding acid. The sequence is that of Betaine aldehyde dehydrogenase from Brucella abortus (strain S19).